Reading from the N-terminus, the 394-residue chain is Subtilisin-like protease CPC735_005570 (394 aa).

Residues 1-21 form the signal peptide; the sequence is MRAIISVALFLSLSLLSAVNA. Positions 22-114 are excised as a propeptide; sequence AEILSAGDTD…IEHDRIANAR (93 aa). The 74-residue stretch at 37-110 folds into the Inhibitor I9 domain; the sequence is SYIVVMRDGL…AVKYIEHDRI (74 aa). One can recognise a Peptidase S8 domain in the interval 123 to 394; sequence GWNLARISHK…RLLLYNGSGR (272 aa). Active-site charge relay system residues include aspartate 155 and histidine 186. Residues asparagine 216 and asparagine 247 are each glycosylated (N-linked (GlcNAc...) asparagine). Residue serine 340 is the Charge relay system of the active site. Asparagine 382 and asparagine 390 each carry an N-linked (GlcNAc...) asparagine glycan.

Belongs to the peptidase S8 family.

The protein localises to the secreted. In terms of biological role, secreted subtilisin-like serine protease with keratinolytic activity that contributes to pathogenicity. This Coccidioides posadasii (strain C735) (Valley fever fungus) protein is Subtilisin-like protease CPC735_005570.